A 116-amino-acid chain; its full sequence is Large ribosomal subunit protein uL23 (116 aa).

Belongs to the universal ribosomal protein uL23 family. In terms of assembly, part of the 50S ribosomal subunit. Contacts protein L29, and trigger factor when it is bound to the ribosome.

Functionally, one of the early assembly proteins it binds 23S rRNA. One of the proteins that surrounds the polypeptide exit tunnel on the outside of the ribosome. Forms the main docking site for trigger factor binding to the ribosome. The sequence is that of Large ribosomal subunit protein uL23 from Psychrobacter sp. (strain PRwf-1).